A 411-amino-acid chain; its full sequence is 2,3-bisphosphoglycerate-independent phosphoglycerate mutase (411 aa).

It belongs to the BPG-independent phosphoglycerate mutase family. A-PGAM subfamily.

It carries out the reaction (2R)-2-phosphoglycerate = (2R)-3-phosphoglycerate. Its pathway is carbohydrate degradation; glycolysis; pyruvate from D-glyceraldehyde 3-phosphate: step 3/5. Its function is as follows. Catalyzes the interconversion of 2-phosphoglycerate and 3-phosphoglycerate. The sequence is that of 2,3-bisphosphoglycerate-independent phosphoglycerate mutase from Pyrobaculum neutrophilum (strain DSM 2338 / JCM 9278 / NBRC 100436 / V24Sta) (Thermoproteus neutrophilus).